The following is a 293-amino-acid chain: Acetylglutamate kinase (293 aa).

Residues 68-69 (GG), Arg90, and Asn189 contribute to the substrate site.

The protein belongs to the acetylglutamate kinase family. ArgB subfamily.

It is found in the cytoplasm. The catalysed reaction is N-acetyl-L-glutamate + ATP = N-acetyl-L-glutamyl 5-phosphate + ADP. The protein operates within amino-acid biosynthesis; L-arginine biosynthesis; N(2)-acetyl-L-ornithine from L-glutamate: step 2/4. In terms of biological role, catalyzes the ATP-dependent phosphorylation of N-acetyl-L-glutamate. The polypeptide is Acetylglutamate kinase (Caldicellulosiruptor bescii (strain ATCC BAA-1888 / DSM 6725 / KCTC 15123 / Z-1320) (Anaerocellum thermophilum)).